The chain runs to 192 residues: uncharacterized protein (192 aa).

One can recognise a Nudix hydrolase domain in the interval 29–160 (HRQAAVLIPI…PLDIYRRGDS (132 aa)). Residues 67–89 (GAVDDTDASVIAAALREAEEEVA) carry the Nudix box motif. Mg(2+) is bound by residues E83 and E87.

It belongs to the Nudix hydrolase family. PCD1 subfamily. The cofactor is Mn(2+). Mg(2+) is required as a cofactor.

Functionally, probably mediates the hydrolysis of some nucleoside diphosphate derivatives. This is an uncharacterized protein from Shigella flexneri.